The sequence spans 272 residues: MSPATVLDSILEGVRADVAAREASVSLSEIKAAAAAAPPPLDVMAALREPGIGVIAEVKRASPSAGALATIADPAKLAQAYQDGGARIVSVVTEQRRFQGSLDDLDAVRASVSIPVLRKDFVVQPYQIHEARAHGADMLLLIVAALEQSVLVSMLDRTESLGMIALVEVHTEQEADRALKAGAKVIGVNARDLMTLDVDRDCFARIAPGLPSSVIRIAESGVRGTADLLAYAGAGADAVLVGEGLVTSGDPRAAVADLVTAGTHPSCPKPAR.

The protein belongs to the TrpC family.

The enzyme catalyses 1-(2-carboxyphenylamino)-1-deoxy-D-ribulose 5-phosphate + H(+) = (1S,2R)-1-C-(indol-3-yl)glycerol 3-phosphate + CO2 + H2O. It functions in the pathway amino-acid biosynthesis; L-tryptophan biosynthesis; L-tryptophan from chorismate: step 4/5. This is Indole-3-glycerol phosphate synthase (trpC) from Mycobacterium tuberculosis (strain CDC 1551 / Oshkosh).